The following is a 95-amino-acid chain: Aspartyl/glutamyl-tRNA(Asn/Gln) amidotransferase subunit C (95 aa).

It belongs to the GatC family. In terms of assembly, heterotrimer of A, B and C subunits.

The catalysed reaction is L-glutamyl-tRNA(Gln) + L-glutamine + ATP + H2O = L-glutaminyl-tRNA(Gln) + L-glutamate + ADP + phosphate + H(+). It catalyses the reaction L-aspartyl-tRNA(Asn) + L-glutamine + ATP + H2O = L-asparaginyl-tRNA(Asn) + L-glutamate + ADP + phosphate + 2 H(+). Its function is as follows. Allows the formation of correctly charged Asn-tRNA(Asn) or Gln-tRNA(Gln) through the transamidation of misacylated Asp-tRNA(Asn) or Glu-tRNA(Gln) in organisms which lack either or both of asparaginyl-tRNA or glutaminyl-tRNA synthetases. The reaction takes place in the presence of glutamine and ATP through an activated phospho-Asp-tRNA(Asn) or phospho-Glu-tRNA(Gln). This chain is Aspartyl/glutamyl-tRNA(Asn/Gln) amidotransferase subunit C, found in Desulforapulum autotrophicum (strain ATCC 43914 / DSM 3382 / VKM B-1955 / HRM2) (Desulfobacterium autotrophicum).